The primary structure comprises 324 residues: Germ cell-specific gene 1 protein (324 aa).

The next 4 membrane-spanning stretches (helical) occupy residues 15-35, 127-147, 164-184, and 208-228; these read TFIS…SLLS, LSLG…LLLL, AFAA…HMLY, and WAFY…VTTF.

Belongs to the GSG1 family. In terms of assembly, interacts with PAPOLB. As to expression, expressed in spermatogenic cells (at protein level). Expressed in germ cells within the testis from day 21 onwards.

Its subcellular location is the endoplasmic reticulum membrane. Its function is as follows. May cause the redistribution of PAPOLB from the cytosol to the endoplasmic reticulum. The sequence is that of Germ cell-specific gene 1 protein (Gsg1) from Mus musculus (Mouse).